The chain runs to 73 residues: Translation initiation factor IF-1 (73 aa).

The 72-residue stretch at 1 to 72 (MSKDDLIQFT…TKGRVILRHQ (72 aa)) folds into the S1-like domain.

Belongs to the IF-1 family. In terms of assembly, component of the 30S ribosomal translation pre-initiation complex which assembles on the 30S ribosome in the order IF-2 and IF-3, IF-1 and N-formylmethionyl-tRNA(fMet); mRNA recruitment can occur at any time during PIC assembly.

The protein resides in the cytoplasm. One of the essential components for the initiation of protein synthesis. Stabilizes the binding of IF-2 and IF-3 on the 30S subunit to which N-formylmethionyl-tRNA(fMet) subsequently binds. Helps modulate mRNA selection, yielding the 30S pre-initiation complex (PIC). Upon addition of the 50S ribosomal subunit IF-1, IF-2 and IF-3 are released leaving the mature 70S translation initiation complex. The chain is Translation initiation factor IF-1 from Rickettsia bellii (strain OSU 85-389).